A 335-amino-acid polypeptide reads, in one-letter code: Methionine import ATP-binding protein MetN 2 (335 aa).

Residues 2–242 (IEFQNVHKTY…PEHPTTKRFV (241 aa)) enclose the ABC transporter domain. 38–45 (GHSGAGKS) serves as a coordination point for ATP.

This sequence belongs to the ABC transporter superfamily. Methionine importer (TC 3.A.1.24) family. As to quaternary structure, the complex is composed of two ATP-binding proteins (MetN), two transmembrane proteins (MetI) and a solute-binding protein (MetQ).

It localises to the cell inner membrane. The enzyme catalyses L-methionine(out) + ATP + H2O = L-methionine(in) + ADP + phosphate + H(+). The catalysed reaction is D-methionine(out) + ATP + H2O = D-methionine(in) + ADP + phosphate + H(+). In terms of biological role, part of the ABC transporter complex MetNIQ involved in methionine import. Responsible for energy coupling to the transport system. This is Methionine import ATP-binding protein MetN 2 from Pseudomonas entomophila (strain L48).